The sequence spans 309 residues: Hydroxyacylglutathione hydrolase, mitochondrial (309 aa).

A mitochondrion-targeting transit peptide spans 1 to 24 (MVLGRGSLCLRSLSALGATCARRG). Lys90 is subject to N6-acetyllysine. Positions 103, 105, 107, and 108 each coordinate Zn(2+). The residue at position 117 (Lys117) is an N6-acetyllysine. Residues His159 and Asp183 each coordinate Zn(2+). Substrate is bound by residues 192-194 (KFY) and 222-224 (HEY). A Zn(2+)-binding site is contributed by His222. Lys230 carries the post-translational modification N6-acetyllysine; alternate. Lys230 bears the N6-succinyllysine; alternate mark. Residue 298–301 (RREK) participates in substrate binding.

It belongs to the metallo-beta-lactamase superfamily. Glyoxalase II family. In terms of assembly, monomer. Zn(2+) is required as a cofactor.

The protein resides in the mitochondrion matrix. It is found in the cytoplasm. It catalyses the reaction an S-(2-hydroxyacyl)glutathione + H2O = a 2-hydroxy carboxylate + glutathione + H(+). It carries out the reaction (R)-S-lactoylglutathione + H2O = (R)-lactate + glutathione + H(+). It functions in the pathway secondary metabolite metabolism; methylglyoxal degradation; (R)-lactate from methylglyoxal: step 2/2. Thiolesterase that catalyzes the hydrolysis of S-D-lactoyl-glutathione to form glutathione and D-lactic acid. The chain is Hydroxyacylglutathione hydrolase, mitochondrial (Hagh) from Mus musculus (Mouse).